We begin with the raw amino-acid sequence, 267 residues long: Proteasome assembly chaperone 2 (267 aa).

Belongs to the PSMG2 family. In terms of assembly, component of the 20S proteasome chaperone. Forms a heterodimer with PBA1 that binds to proteasome precursors.

Its subcellular location is the cytoplasm. Involved in 20S proteasome assembly. Required for maximal proteasome activity. Affects the chymotrypsin-like activity of the proteasome. Can be degraded by the proteasome. Involved in the endoplasmic reticulum-associated degradation (ERAD). The protein is Proteasome assembly chaperone 2 (ADD66) of Saccharomyces cerevisiae (strain ATCC 204508 / S288c) (Baker's yeast).